The chain runs to 425 residues: MKLDTSHMRYLTTDDFRVLQAVEQGSRSHEVVPTPLIHQISGMRSQSGTNRAISDLAKLSLISKMRNVKYDGYRLTYNGIDYLALKTMLNRDTVYSVGNTIGVGKESDIYKVSDKNGNPRVMKIHRLGRTSFHSVRNNRDYLKKSNQGANWMHLSRLAANKEYQFMSMLYSKGFKVPEPFDNSRHIVVMELIEGYPMRRLRKHKNIPKLYSDLMCFIVDLANSGLIHCDFNEFNIMIKDKLEDENDCGFVVIDFPQCISIQHQDADYYFQRDVDCIRRFFKKKLKYEPKPDSSMLDTEGFGDGYKYAYPDFKRDVKRTDNLDELVQASGFSKKHPGDRGLETAVESMRNAVYNSDDDMSNDEAEEENGEGDYSEEDEYYDSELDNESSEDDSEDAQEEENERIIEALSSGVENLKMDKLGNYILE.

The region spanning 95-257 is the Protein kinase domain; it reads YSVGNTIGVG…GFVVIDFPQC (163 aa). ATP is bound at residue Lys123. The Proton acceptor role is filled by Asp229. A Phosphoserine modification is found at Ser346. The interval 350 to 420 is disordered; sequence AVYNSDDDMS…VENLKMDKLG (71 aa). Acidic residues predominate over residues 354-400; it reads SDDDMSNDEAEEENGEGDYSEEDEYYDSELDNESSEDDSEDAQEEEN.

The protein belongs to the protein kinase superfamily. RIO-type Ser/Thr kinase family. In terms of assembly, component of a late pre-40S ribosomal particle, composed of the 40S ribosomal proteins and the non-ribosomal factors DIM1, DIM2, ENP1, HRR25, LTV1, NOB1, RIO2 and TSR1. Requires Mg(2+) as cofactor. In terms of processing, autophosphorylated.

The protein resides in the cytoplasm. It localises to the nucleus. It carries out the reaction L-seryl-[protein] + ATP = O-phospho-L-seryl-[protein] + ADP + H(+). It catalyses the reaction L-threonyl-[protein] + ATP = O-phospho-L-threonyl-[protein] + ADP + H(+). In terms of biological role, required for the final endonucleolytic cleavage of 20S pre-rRNA at site D in the cytoplasm, converting it into the mature 18S rRNA. Involved in normal export of the pre-40S particles from the nucleus to the cytoplasm. No longer associates with pre-40S subunits in RPS19 disruptions, suggesting it acts after the ribosomal protein in 18S rRNA maturation. The polypeptide is Serine/threonine-protein kinase RIO2 (RIO2) (Saccharomyces cerevisiae (strain ATCC 204508 / S288c) (Baker's yeast)).